Consider the following 444-residue polypeptide: Phosphoglucosamine mutase (444 aa).

Catalysis depends on Ser-100, which acts as the Phosphoserine intermediate. Ser-100, Asp-234, Asp-236, and Asp-238 together coordinate Mg(2+). Ser-100 is modified (phosphoserine).

This sequence belongs to the phosphohexose mutase family. Mg(2+) is required as a cofactor. In terms of processing, activated by phosphorylation.

It carries out the reaction alpha-D-glucosamine 1-phosphate = D-glucosamine 6-phosphate. Catalyzes the conversion of glucosamine-6-phosphate to glucosamine-1-phosphate. This chain is Phosphoglucosamine mutase, found in Rubrobacter xylanophilus (strain DSM 9941 / JCM 11954 / NBRC 16129 / PRD-1).